Here is a 451-residue protein sequence, read N- to C-terminus: MKRFTRAYSSATTTLGAAPIPASKIKYIPSTGTYPKGFVASGVFVGVKPGNTSKPDLAIISSDRPCAAAGVFTKNKFQAAPVTFSRKLLQQKKNAGLRSVVINSGNANAVTGTGGLEDATNMARTTDQRVGDEDSTLVMSTGVIGQRLPIQKIVDHIPMAYHKAGDSHSHWLNCAKAICTTDTFPKLMSRTFELPSSPGVEYRIAGLTKGAGMIAPNMATLLTVLATDAPIAPAVMPNVLRHAVDRSFNAITIDGDSSTNDTVALLANGAAGGKEIASEQSPDFEAFQGLLTEFSADLAKYIVRDGEGATKFVTIRVVDSATEEAARQVARSIATSPLVKTALYGKDANWGRILCAAGYALISPPGQPINDVPEIVPERTNVSFVPTDGSTELKLLVDGEPEQVNEERASEILAMEDLEIVVRLGTGDKSAVHWTCDFSHDYVTINGDYRT.

The substrate site is built by threonine 180, lysine 209, threonine 220, glutamate 307, asparagine 446, and threonine 451. Threonine 220 (nucleophile) is an active-site residue.

It belongs to the ArgJ family. As to quaternary structure, heterodimer of an alpha and a beta chain. The alpha and beta chains are autoproteolytically processed from a single precursor protein within the mitochondrion.

The protein localises to the mitochondrion matrix. The catalysed reaction is N(2)-acetyl-L-ornithine + L-glutamate = N-acetyl-L-glutamate + L-ornithine. It carries out the reaction L-glutamate + acetyl-CoA = N-acetyl-L-glutamate + CoA + H(+). The protein operates within amino-acid biosynthesis; L-arginine biosynthesis; L-ornithine and N-acetyl-L-glutamate from L-glutamate and N(2)-acetyl-L-ornithine (cyclic): step 1/1. It functions in the pathway amino-acid biosynthesis; L-arginine biosynthesis; N(2)-acetyl-L-ornithine from L-glutamate: step 1/4. Catalyzes two activities which are involved in the cyclic version of arginine biosynthesis: the synthesis of acetylglutamate from glutamate and acetyl-CoA, and of ornithine by transacetylation between acetylornithine and glutamate. This is Arginine biosynthesis bifunctional protein ArgJ, mitochondrial from Fusarium vanettenii (strain ATCC MYA-4622 / CBS 123669 / FGSC 9596 / NRRL 45880 / 77-13-4) (Fusarium solani subsp. pisi).